The chain runs to 257 residues: Flap endonuclease Xni (257 aa).

D109 is a binding site for Mg(2+). The region spanning V165 to E254 is the 5'-3' exonuclease domain. Residues L176, P185, I187, and I190 each contribute to the K(+) site. Residues G189–A194 are interaction with DNA.

This sequence belongs to the Xni family. Mg(2+) is required as a cofactor. The cofactor is K(+).

Functionally, has flap endonuclease activity. During DNA replication, flap endonucleases cleave the 5'-overhanging flap structure that is generated by displacement synthesis when DNA polymerase encounters the 5'-end of a downstream Okazaki fragment. This is Flap endonuclease Xni from Vibrio atlanticus (strain LGP32) (Vibrio splendidus (strain Mel32)).